We begin with the raw amino-acid sequence, 256 residues long: Protein FixA (256 aa).

This sequence belongs to the ETF beta-subunit/FixA family. Heterodimer of FixA and FixB.

It functions in the pathway amine and polyamine metabolism; carnitine metabolism. Required for anaerobic carnitine reduction. May bring reductant to CaiA. This is Protein FixA from Escherichia coli O7:K1 (strain IAI39 / ExPEC).